The primary structure comprises 273 residues: SET domain-containing protein 9 (273 aa).

The 174-residue stretch at 96-269 (FSVAQATSSL…QGEELFSNYY (174 aa)) folds into the SET domain. Residue Y268 participates in S-adenosyl-L-methionine binding.

The protein belongs to the class V-like SAM-binding methyltransferase superfamily.

The chain is SET domain-containing protein 9 (SETD9) from Pongo abelii (Sumatran orangutan).